The following is a 906-amino-acid chain: Catenin alpha-1 (906 aa).

Threonine 2 is modified (N-acetylthreonine). Residues 2–228 (TAVHAGNINF…PILYTASQAC (227 aa)) form an involved in homodimerization region. Lysine 57 participates in a covalent cross-link: Glycyl lysine isopeptide (Lys-Gly) (interchain with G-Cter in SUMO2). The interaction with JUP and CTNNB1 stretch occupies residues 97–148 (VRKQGDLMKAAAGEFADDPCSSVKRGNMVRAARALLSAVTRLLILADMADVY). Phosphoserine is present on residues serine 264, serine 268, serine 295, and serine 297. The interval 325–394 (TRDDRRERIV…AVMDHVSDSF (70 aa)) is interaction with alpha-actinin. Phosphothreonine is present on threonine 634. The residue at position 641 (serine 641) is a Phosphoserine; by CK2. Phosphothreonine is present on threonine 645. 2 positions are modified to phosphoserine; by CK1: serine 652 and serine 655. Threonine 658 carries the phosphothreonine; by CK1 modification. Lysine 797 participates in a covalent cross-link: Glycyl lysine isopeptide (Lys-Gly) (interchain with G-Cter in SUMO2). Phosphoserine is present on serine 851. Residues 864–880 (PEKKPLVKREKQDETQT) are compositionally biased toward basic and acidic residues. Residues 864-894 (PEKKPLVKREKQDETQTKIKRASQKKHVNPV) are disordered. Positions 881-891 (KIKRASQKKHV) are enriched in basic residues.

This sequence belongs to the vinculin/alpha-catenin family. As to quaternary structure, monomer and homodimer; the monomer preferentially binds to CTNNB1 and the homodimer to actin. Component of an cadherin:catenin adhesion complex composed of at least of CDH26, beta-catenin/CTNNB1, alpha-catenin/CTNNA1 and p120 catenin/CTNND1. Possible component of an E-cadherin/ catenin adhesion complex together with E-cadherin/CDH1 and beta-catenin/CTNNB1 or gamma-catenin/JUP; the complex is located to adherens junctions. The stable association of CTNNA1 is controversial as CTNNA1 was shown not to bind to F-actin when assembled in the complex. Alternatively, the CTNNA1-containing complex may be linked to F-actin by other proteins such as LIMA1. Binds AFDN and F-actin. Interacts with ARHGAP21. Interacts with AJUBA. Interacts with LIMA1. Interacts with vinculin/VCL. Interacts with TJP2/ZO2 (via N-terminus). Interacts with TJP1/ZO1 (via N-terminus). Sumoylated. Post-translationally, phosphorylation seems to contribute to the strength of cell-cell adhesion rather than to the basic capacity for cell-cell adhesion. As to expression, ubiquitously expressed in normal tissues. Abundantly expressed in brain and cerebellum, also expressed in the placenta, liver, lung, colon, heart, pancreas, stomach and thymus.

The protein localises to the cytoplasm. It localises to the cytoskeleton. It is found in the cell junction. The protein resides in the adherens junction. Its subcellular location is the cell membrane. The protein localises to the nucleus. Associates with the cytoplasmic domain of a variety of cadherins. The association of catenins to cadherins produces a complex which is linked to the actin filament network, and which seems to be of primary importance for cadherins cell-adhesion properties. Can associate with both E- and N-cadherins. Originally believed to be a stable component of E-cadherin/catenin adhesion complexes and to mediate the linkage of cadherins to the actin cytoskeleton at adherens junctions. In contrast, cortical actin was found to be much more dynamic than E-cadherin/catenin complexes and CTNNA1 was shown not to bind to F-actin when assembled in the complex suggesting a different linkage between actin and adherens junctions components. The homodimeric form may regulate actin filament assembly and inhibit actin branching by competing with the Arp2/3 complex for binding to actin filaments. Involved in the regulation of WWTR1/TAZ, YAP1 and TGFB1-dependent SMAD2 and SMAD3 nuclear accumulation. May play a crucial role in cell differentiation. In Homo sapiens (Human), this protein is Catenin alpha-1.